Reading from the N-terminus, the 353-residue chain is L-tryptophan dehydrogenase (353 aa).

Arg-44 is a binding site for NAD(+). Lys-80 (proton donor/acceptor) is an active-site residue. NAD(+) is bound by residues Asp-114, Thr-146, 176–181, Lys-204, and 255–257; these read GLGNVG and AAN.

The protein belongs to the Glu/Leu/Phe/Val dehydrogenases family. Homodimer.

It catalyses the reaction L-tryptophan + NAD(+) + H2O = indole-3-pyruvate + NH4(+) + NADH + H(+). In terms of biological role, catalyzes the reversible oxidative deamination of L-tryptophan to indole-3-pyruvate in the presence of NAD(+). Cannot use other L-amino acids and D-Trp. Involved in the biosynthesis of scytonemin, a cyanobacterial radiation-absorbing pigment. The sequence is that of L-tryptophan dehydrogenase from Nostoc punctiforme (strain ATCC 29133 / PCC 73102).